Here is a 160-residue protein sequence, read N- to C-terminus: MNIWVDADACPAEVKDILWRAAQRWQVPVTLVANQLLRVPASPWMRAVQVPRGFDVADAHIVASAVPGDLVITADIPLAAEVVGKGVAAMSWRGEVFDAGSIGERLTMRDMMEELRAGGVDIGGPAAFGQADRRAFANALDAAMQRWARTRGAGGKPGAV.

Belongs to the UPF0178 family.

This chain is UPF0178 protein BPP1051, found in Bordetella parapertussis (strain 12822 / ATCC BAA-587 / NCTC 13253).